Here is a 945-residue protein sequence, read N- to C-terminus: Isoleucine--tRNA ligase (945 aa).

Residues 66–76 (PYANGDIHLGH) carry the 'HIGH' region motif. Residue Glu-581 participates in L-isoleucyl-5'-AMP binding. Residues 622-626 (KMSKS) carry the 'KMSKS' region motif. Lys-625 serves as a coordination point for ATP. Positions 908, 911, 928, and 931 each coordinate Zn(2+).

Belongs to the class-I aminoacyl-tRNA synthetase family. IleS type 1 subfamily. As to quaternary structure, monomer. Zn(2+) is required as a cofactor.

The protein resides in the cytoplasm. It catalyses the reaction tRNA(Ile) + L-isoleucine + ATP = L-isoleucyl-tRNA(Ile) + AMP + diphosphate. In terms of biological role, catalyzes the attachment of isoleucine to tRNA(Ile). As IleRS can inadvertently accommodate and process structurally similar amino acids such as valine, to avoid such errors it has two additional distinct tRNA(Ile)-dependent editing activities. One activity is designated as 'pretransfer' editing and involves the hydrolysis of activated Val-AMP. The other activity is designated 'posttransfer' editing and involves deacylation of mischarged Val-tRNA(Ile). The chain is Isoleucine--tRNA ligase from Paraburkholderia xenovorans (strain LB400).